The following is a 178-amino-acid chain: Cytochrome b6-f complex iron-sulfur subunit 2 (178 aa).

Residues 17–36 (LLNFFTGAIVATTASAAIYP) traverse the membrane as a helical segment. The Rieske domain occupies 61–161 (GHPIPASQIL…VQVKDDYIWI (101 aa)). 4 residues coordinate [2Fe-2S] cluster: cysteine 107, histidine 109, cysteine 125, and histidine 128. Cysteine 112 and cysteine 127 are oxidised to a cystine.

The protein belongs to the Rieske iron-sulfur protein family. As to quaternary structure, the 4 large subunits of the cytochrome b6-f complex are cytochrome b6, subunit IV (17 kDa polypeptide, PetD), cytochrome f and the Rieske protein, while the 4 small subunits are PetG, PetL, PetM and PetN. The complex functions as a dimer. Requires [2Fe-2S] cluster as cofactor.

It is found in the cellular thylakoid membrane. It catalyses the reaction 2 oxidized [plastocyanin] + a plastoquinol + 2 H(+)(in) = 2 reduced [plastocyanin] + a plastoquinone + 4 H(+)(out). In terms of biological role, component of the cytochrome b6-f complex, which mediates electron transfer between photosystem II (PSII) and photosystem I (PSI), cyclic electron flow around PSI, and state transitions. This chain is Cytochrome b6-f complex iron-sulfur subunit 2, found in Nostoc sp. (strain PCC 7120 / SAG 25.82 / UTEX 2576).